Reading from the N-terminus, the 951-residue chain is Zinc fingers and homeoboxes protein 3 (951 aa).

The tract at residues 1-66 (MASKRKSTTP…SSTDGSALAN (66 aa)) is disordered. Low complexity predominate over residues 42-58 (PSEAPEASSEAAPNPSS). C2H2-type zinc fingers lie at residues 77–100 (YSCK…TSEH) and 109–132 (FVCT…AKCH). Residues 198 to 249 (KENAPTQPGGEALPKPLAGETEGKEGDHTFINGATPVSQASANSTKPPHTAN) are disordered. The segment covering 232-244 (TPVSQASANSTKP) has biased composition (polar residues). The segment at 237 to 481 (ASANSTKPPH…LLTACPSITS (245 aa)) is required for homodimerization and interaction with NFYA. Residues 297 to 495 (LSSIPTYNAA…DANIYKNKKS (199 aa)) are required for repressor activity. 2 consecutive DNA-binding regions (homeobox) follow at residues 298-357 (SSIP…GISW) and 487-546 (ANIY…RNLK). The required for nuclear localization stretch occupies residues 490–548 (YKNKKSHEQLSALKGSFCRNQFPGQSEVEHLTKVTGLSTREVRKWFSDRRYHCRNLKGT). Ser-597 carries the phosphoserine modification. Residues 605–664 (TPTKYKERAPEQLRVLESSFAQNPLPPEEELDRLRSETKMTRREIDGWFSERRKRVNAEE) constitute a DNA-binding region (homeobox 3). Disordered regions lie at residues 621–642 (ESSF…RSET) and 661–702 (NAEE…NGSS). Positions 661-674 (NAEETKKADGHAPQ) are enriched in basic and acidic residues. Over residues 675–690 (EEAEGAEEEGRDEELA) the composition is skewed to acidic residues. A phosphoserine mark is found at Ser-701 and Ser-716. DNA-binding regions (homeobox) lie at residues 759 to 818 (PSRV…KNGQ) and 830 to 889 (FPPG…TRAV). The interval 885–951 (ETRAVADTSS…PQSGRQLETD (67 aa)) is disordered. Residues Ser-922 and Ser-941 each carry the phosphoserine modification. Polar residues predominate over residues 937 to 951 (FDTSSPQSGRQLETD).

This sequence belongs to the ZHX family. Homodimer (via homeobox domain 1). Heterodimer with ZHX1 (via homeobox domain 1). Heterodimer with ZHX2 (via homeobox domain 1). Heterodimerization with ZHX1 is a prerequisite for repressor activity. Interacts with NFYA. Widely expressed.

It localises to the cytoplasm. Its subcellular location is the nucleus. In terms of biological role, acts as a transcriptional repressor. Involved in the early stages of mesenchymal stem cell (MSC) osteogenic differentiation. Is a regulator of podocyte gene expression during primary glomerula disease. Binds to promoter DNA. This chain is Zinc fingers and homeoboxes protein 3 (Zhx3), found in Rattus norvegicus (Rat).